The chain runs to 151 residues: Ocs element-binding factor 1 (151 aa).

A compositionally biased stretch (polar residues) spans 1-17; it reads MSSSSLSPTAGRTSGSD. Residues 1 to 47 form a disordered region; sequence MSSSSLSPTAGRTSGSDGDSAADTHRREKRRLSNRESARRSRLRKQQ. Basic and acidic residues predominate over residues 22–39; it reads ADTHRREKRRLSNRESAR. The bZIP domain occupies 24–87; that stretch reads THRREKRRLS…TRVEQENTVL (64 aa). A basic motif region spans residues 26 to 45; that stretch reads RREKRRLSNRESARRSRLRK. A leucine-zipper region spans residues 52-59; it reads LVQEVARL.

It belongs to the bZIP family. In terms of tissue distribution, roots and shoots of young plants, and basal portion of leaves.

It localises to the nucleus. In terms of biological role, may contribute to developmentally specific patterns of gene expression. Binds specifically to ocs elements which are transcriptional enhancer found in the promoters of several plant genes. OCSBF-1 is able to bind to a site within each half of the ocs element as well as to animal AP-1 and CREB sites. This is Ocs element-binding factor 1 (OBF1) from Zea mays (Maize).